The chain runs to 404 residues: Glucose-1-phosphate adenylyltransferase (404 aa).

Alpha-D-glucose 1-phosphate contacts are provided by residues Y99, G164, 179-180 (EK), and S197.

The protein belongs to the bacterial/plant glucose-1-phosphate adenylyltransferase family.

It catalyses the reaction alpha-D-glucose 1-phosphate + ATP + H(+) = ADP-alpha-D-glucose + diphosphate. Its pathway is capsule biogenesis; capsule polysaccharide biosynthesis. It functions in the pathway glycan biosynthesis; glycogen biosynthesis. Functionally, involved in the biosynthesis of ADP-glucose, a building block, required in the biosynthesis of maltose-1-phosphate (M1P) and in the elongation reactions to produce linear alpha-1,4-glucans. Catalyzes the reaction between ATP and alpha-D-glucose 1-phosphate (G1P) to produce pyrophosphate and ADP-Glc. In Mycobacterium marinum (strain ATCC BAA-535 / M), this protein is Glucose-1-phosphate adenylyltransferase.